The primary structure comprises 1093 residues: Phosphorylase b kinase regulatory subunit beta (1093 aa).

The residue at position 2 (Ala-2) is an N-acetylalanine. The residue at position 4 (Ala-4) is a Phosphoserine. Residues 7–29 (LTAEVSWKVLERRARTKRSGSVY) form a calmodulin-binding region. Ser-12 bears the Phosphoserine; by autocatalysis mark. Residues Ser-27 and Ser-701 each carry the phosphoserine modification. A disordered region spans residues 689–716 (EPPKHSKVKRQSSTPSAPELGQQPDVNI). Calmodulin-binding stretches follow at residues 768–795 (RVYR…FSSS) and 920–951 (NGRC…ILER). A lipid anchor (S-farnesyl cysteine) is attached at Cys-1090.

Belongs to the phosphorylase b kinase regulatory chain family. In terms of assembly, hexadecamer of 4 heterotetramers, each composed of alpha, beta, gamma, and delta subunits. Alpha (PHKA1 or PHKA2) and beta (PHKB) are regulatory subunits, gamma (PHKG1 or PHKG2) is the catalytic subunit, and delta is calmodulin. In terms of processing, ser-701 is probably phosphorylated by PKA. Post-translationally, although the final Cys may be farnesylated, the terminal tripeptide is probably not removed, and the C-terminus is not methylated.

Its subcellular location is the cell membrane. It participates in glycan biosynthesis; glycogen metabolism. By phosphorylation of various serine residues. In terms of biological role, phosphorylase b kinase catalyzes the phosphorylation of serine in certain substrates, including troponin I. The beta chain acts as a regulatory unit and modulates the activity of the holoenzyme in response to phosphorylation. The protein is Phosphorylase b kinase regulatory subunit beta (PHKB) of Homo sapiens (Human).